The chain runs to 228 residues: Ribose-5-phosphate isomerase A (228 aa).

Residues 26–29, 81–84, and 94–97 each bind substrate; these read SGST, DGAD, and KGGG. Catalysis depends on Glu-103, which acts as the Proton acceptor. Lys-121 provides a ligand contact to substrate.

It belongs to the ribose 5-phosphate isomerase family. In terms of assembly, homodimer.

The catalysed reaction is aldehydo-D-ribose 5-phosphate = D-ribulose 5-phosphate. Its pathway is carbohydrate degradation; pentose phosphate pathway; D-ribose 5-phosphate from D-ribulose 5-phosphate (non-oxidative stage): step 1/1. Functionally, catalyzes the reversible conversion of ribose-5-phosphate to ribulose 5-phosphate. The chain is Ribose-5-phosphate isomerase A from Shouchella clausii (strain KSM-K16) (Alkalihalobacillus clausii).